The sequence spans 337 residues: PHD finger protein 11 (337 aa).

Residues Lys-42–Leu-78 form a C2HC pre-PHD-type zinc finger. The PHD-type zinc finger occupies Leu-108–Ala-160.

In terms of assembly, interacts with BRCA1 and RELA.

It is found in the nucleus. Positive regulator of Th1-type cytokine gene expression. The sequence is that of PHD finger protein 11 (PHF11) from Bos taurus (Bovine).